Here is a 584-residue protein sequence, read N- to C-terminus: Transcriptional regulator STP2 (584 aa).

Polar residues-rich tracts occupy residues methionine 1–lysine 11 and alanine 180–aspartate 202. Disordered regions lie at residues methionine 1–lysine 22 and lysine 161–serine 214. Low complexity predominate over residues serine 203–serine 214. A C2H2-type zinc finger spans residues phenylalanine 225–histidine 247. Disordered stretches follow at residues arginine 381–proline 496 and glutamine 553–phenylalanine 584. Low complexity predominate over residues serine 394–isoleucine 407. Basic residues predominate over residues glutamine 431–glutamine 441. Residues asparagine 442–proline 480 show a composition bias toward low complexity. The segment covering glutamine 481–proline 496 has biased composition (polar residues).

Proteolytically cleaved: activated by the amino acid-induced proteolytic removal of an N-terminal inhibitory domain.

The protein localises to the cell membrane. The protein resides in the nucleus. Functionally, transcription factor involved in the regulation of gene expression in response to extracellular amino acid levels. Synthesized as latent cytoplasmic precursor, which, upon a signal initiated by the plasma membrane SPS amino acid sensor system (including CSY1 and CSH3), becomes proteolytically activated and relocates to the nucleus, where it induces the expression of SPS-sensor-regulated genes. Required for efficient alkalinization through the release of ammonia from the cells produced during the breakdown of amino acids, and subsequent switch to the hyphal form. This is Transcriptional regulator STP2 (STP2) from Candida albicans (strain SC5314 / ATCC MYA-2876) (Yeast).